Here is a 324-residue protein sequence, read N- to C-terminus: Aspartate carbamoyltransferase catalytic subunit (324 aa).

Carbamoyl phosphate contacts are provided by Arg-55 and Thr-56. Lys-83 serves as a coordination point for L-aspartate. Carbamoyl phosphate contacts are provided by Arg-105, His-135, and Gln-138. L-aspartate contacts are provided by Arg-173 and Arg-227. Residues Gly-268 and Pro-269 each coordinate carbamoyl phosphate.

Belongs to the aspartate/ornithine carbamoyltransferase superfamily. ATCase family. Heterododecamer (2C3:3R2) of six catalytic PyrB chains organized as two trimers (C3), and six regulatory PyrI chains organized as three dimers (R2).

The catalysed reaction is carbamoyl phosphate + L-aspartate = N-carbamoyl-L-aspartate + phosphate + H(+). It participates in pyrimidine metabolism; UMP biosynthesis via de novo pathway; (S)-dihydroorotate from bicarbonate: step 2/3. In terms of biological role, catalyzes the condensation of carbamoyl phosphate and aspartate to form carbamoyl aspartate and inorganic phosphate, the committed step in the de novo pyrimidine nucleotide biosynthesis pathway. The polypeptide is Aspartate carbamoyltransferase catalytic subunit (Nocardioides sp. (strain ATCC BAA-499 / JS614)).